Consider the following 332-residue polypeptide: Anthranilate phosphoribosyltransferase (332 aa).

5-phospho-alpha-D-ribose 1-diphosphate is bound by residues Gly79, 82–83 (GD), Thr87, 89–92 (NIST), 107–115 (KHGNYGATS), and Ala119. Gly79 serves as a coordination point for anthranilate. Ser91 serves as a coordination point for Mg(2+). Asn110 is a binding site for anthranilate. Arg165 contributes to the anthranilate binding site. Mg(2+) is bound by residues Asp223 and Glu224.

The protein belongs to the anthranilate phosphoribosyltransferase family. In terms of assembly, homodimer. Mg(2+) serves as cofactor.

The enzyme catalyses N-(5-phospho-beta-D-ribosyl)anthranilate + diphosphate = 5-phospho-alpha-D-ribose 1-diphosphate + anthranilate. It participates in amino-acid biosynthesis; L-tryptophan biosynthesis; L-tryptophan from chorismate: step 2/5. Its function is as follows. Catalyzes the transfer of the phosphoribosyl group of 5-phosphorylribose-1-pyrophosphate (PRPP) to anthranilate to yield N-(5'-phosphoribosyl)-anthranilate (PRA). This is Anthranilate phosphoribosyltransferase from Bacteroides thetaiotaomicron (strain ATCC 29148 / DSM 2079 / JCM 5827 / CCUG 10774 / NCTC 10582 / VPI-5482 / E50).